The chain runs to 94 residues: Aspartyl/glutamyl-tRNA(Asn/Gln) amidotransferase subunit C (94 aa).

The interval 72–94 (PREKALQGAPEVSEGQFKVPRVV) is disordered.

This sequence belongs to the GatC family. In terms of assembly, heterotrimer of A, B and C subunits.

The enzyme catalyses L-glutamyl-tRNA(Gln) + L-glutamine + ATP + H2O = L-glutaminyl-tRNA(Gln) + L-glutamate + ADP + phosphate + H(+). It catalyses the reaction L-aspartyl-tRNA(Asn) + L-glutamine + ATP + H2O = L-asparaginyl-tRNA(Asn) + L-glutamate + ADP + phosphate + 2 H(+). Allows the formation of correctly charged Asn-tRNA(Asn) or Gln-tRNA(Gln) through the transamidation of misacylated Asp-tRNA(Asn) or Glu-tRNA(Gln) in organisms which lack either or both of asparaginyl-tRNA or glutaminyl-tRNA synthetases. The reaction takes place in the presence of glutamine and ATP through an activated phospho-Asp-tRNA(Asn) or phospho-Glu-tRNA(Gln). The sequence is that of Aspartyl/glutamyl-tRNA(Asn/Gln) amidotransferase subunit C from Moorella thermoacetica (strain ATCC 39073 / JCM 9320).